The primary structure comprises 213 residues: MVERTQIINAVTAAITQAPERKFQESIDITINLKHVDMAQPKNRIDETILLPQAIGVKKIAVLGKGDIVSQARNAGVDLIIGPDEIERLGGVPREARKMAGQYDFFLAETAVMPLVGRWLGQRLGPRGKMPQPIPPTQDITPIVERLRNSVKIRSKDRLNMSVKVGNTGMTVEEVSENIDAVVKRVVGRLESGELNIRSVYVKTTMGPAVKVM.

Belongs to the universal ribosomal protein uL1 family. Part of the 50S ribosomal subunit.

Functionally, binds directly to 23S rRNA. Probably involved in E site tRNA release. Protein L1 is also a translational repressor protein, it controls the translation of its operon by binding to its mRNA. In Methanocorpusculum labreanum (strain ATCC 43576 / DSM 4855 / Z), this protein is Large ribosomal subunit protein uL1.